The following is a 517-amino-acid chain: Histone H4 transcription factor (517 aa).

3 consecutive C2H2-type zinc fingers follow at residues 15 to 39, 129 to 153, and 169 to 193; these read LQCE…VTQH, FLCL…VEAH, and VLCG…LRSH. The C2H2-type 4; degenerate zinc finger occupies 199–221; the sequence is VACPTCGGMFANNTKFLDHIRRQ. C2H2-type zinc fingers lie at residues 229 to 251, 255 to 278, 284 to 306, 312 to 337, and 345 to 368; these read FQCS…MRNH, YKCP…RFRH, FKCD…LDTH, YRCD…RKVH, and YKCH…RKKH. The interval 373-517 is interaction with NPAT; that stretch reads PSGHPRFRYK…IAEEPEIQMV (145 aa). Positions 374-407 are required for activation of histone H4 transcription and contributes to DNA-binding; sequence SGHPRFRYKEHEDGYMRLQLVRYESVELTQQLLR. The interval 431 to 460 is disordered; sequence TVPGEPGRKEEEEEGKGSEGTALSASQDNP. Polar residues predominate over residues 451–460; the sequence is TALSASQDNP.

Binds MBD2 and a histone deacetylase complex. Interacts with NPAT. Ubiquitinated. Ubiquitination may lead to proteasome-mediated degradation. Ubiquitous. Highly expressed in brain, heart, skeletal muscle, spleen, kidney, small intestine, placenta and liver.

The protein localises to the nucleus. Functionally, transcriptional repressor that binds to the consensus sequence 5'-CGGACGTT-3' and to the RB1 promoter. Transcriptional activator that promotes histone H4 gene transcription at the G1/S phase transition in conjunction with NPAT. Also activates transcription of the ATM and PRKDC genes. Autoregulates its expression by associating with its own promoter. This Homo sapiens (Human) protein is Histone H4 transcription factor (HINFP).